The sequence spans 187 residues: Orotate phosphoribosyltransferase (187 aa).

Residues R98, K99, K102, H104, and 128-136 each bind 5-phospho-alpha-D-ribose 1-diphosphate; that span reads EDVTTTGGS. Orotate-binding residues include T132 and R160.

The protein belongs to the purine/pyrimidine phosphoribosyltransferase family. PyrE subfamily. In terms of assembly, homodimer. The cofactor is Mg(2+).

The catalysed reaction is orotidine 5'-phosphate + diphosphate = orotate + 5-phospho-alpha-D-ribose 1-diphosphate. It functions in the pathway pyrimidine metabolism; UMP biosynthesis via de novo pathway; UMP from orotate: step 1/2. Catalyzes the transfer of a ribosyl phosphate group from 5-phosphoribose 1-diphosphate to orotate, leading to the formation of orotidine monophosphate (OMP). In Rhodopseudomonas palustris (strain BisB18), this protein is Orotate phosphoribosyltransferase.